The sequence spans 483 residues: Aspartyl/glutamyl-tRNA(Asn/Gln) amidotransferase subunit B (483 aa).

This sequence belongs to the GatB/GatE family. GatB subfamily. As to quaternary structure, heterotrimer of A, B and C subunits.

The enzyme catalyses L-glutamyl-tRNA(Gln) + L-glutamine + ATP + H2O = L-glutaminyl-tRNA(Gln) + L-glutamate + ADP + phosphate + H(+). The catalysed reaction is L-aspartyl-tRNA(Asn) + L-glutamine + ATP + H2O = L-asparaginyl-tRNA(Asn) + L-glutamate + ADP + phosphate + 2 H(+). Allows the formation of correctly charged Asn-tRNA(Asn) or Gln-tRNA(Gln) through the transamidation of misacylated Asp-tRNA(Asn) or Glu-tRNA(Gln) in organisms which lack either or both of asparaginyl-tRNA or glutaminyl-tRNA synthetases. The reaction takes place in the presence of glutamine and ATP through an activated phospho-Asp-tRNA(Asn) or phospho-Glu-tRNA(Gln). The protein is Aspartyl/glutamyl-tRNA(Asn/Gln) amidotransferase subunit B of Herpetosiphon aurantiacus (strain ATCC 23779 / DSM 785 / 114-95).